The primary structure comprises 399 residues: Formate-dependent phosphoribosylglycinamide formyltransferase (399 aa).

Residues 22–23 and E82 contribute to the N(1)-(5-phospho-beta-D-ribosyl)glycinamide site; that span reads EL. ATP contacts are provided by residues R114, K155, 160-165, 195-198, and E203; these read SSGKGQ and EKMI. The ATP-grasp domain occupies 119-308; that stretch reads RLAAETLHLL…EFALHVRAFL (190 aa). Positions 267 and 279 each coordinate Mg(2+). N(1)-(5-phospho-beta-D-ribosyl)glycinamide contacts are provided by residues D286, K355, and 362-363; that span reads RR.

Belongs to the PurK/PurT family. In terms of assembly, homodimer.

It catalyses the reaction N(1)-(5-phospho-beta-D-ribosyl)glycinamide + formate + ATP = N(2)-formyl-N(1)-(5-phospho-beta-D-ribosyl)glycinamide + ADP + phosphate + H(+). The protein operates within purine metabolism; IMP biosynthesis via de novo pathway; N(2)-formyl-N(1)-(5-phospho-D-ribosyl)glycinamide from N(1)-(5-phospho-D-ribosyl)glycinamide (formate route): step 1/1. Involved in the de novo purine biosynthesis. Catalyzes the transfer of formate to 5-phospho-ribosyl-glycinamide (GAR), producing 5-phospho-ribosyl-N-formylglycinamide (FGAR). Formate is provided by PurU via hydrolysis of 10-formyl-tetrahydrofolate. The polypeptide is Formate-dependent phosphoribosylglycinamide formyltransferase (Proteus mirabilis (strain HI4320)).